Consider the following 216-residue polypeptide: Ras-related protein RABA1c (216 aa).

Gly-20–Ser-27 provides a ligand contact to GTP. Residues Ser-42–Phe-50 carry the Effector region motif. GTP is bound by residues Asp-68 to Gln-72, Asn-126 to Asp-129, and Ser-156 to Ala-157. S-geranylgeranyl cysteine attachment occurs at residues Cys-213 and Cys-214.

The protein belongs to the small GTPase superfamily. Rab family.

It is found in the cell membrane. Functionally, intracellular vesicle trafficking and protein transport. The protein is Ras-related protein RABA1c (RABA1C) of Arabidopsis thaliana (Mouse-ear cress).